Here is a 188-residue protein sequence, read N- to C-terminus: Small ribosomal subunit protein uS7 (188 aa).

It belongs to the universal ribosomal protein uS7 family. Part of the 30S ribosomal subunit.

One of the primary rRNA binding proteins, it binds directly to 16S rRNA where it nucleates assembly of the head domain of the 30S subunit. Is located at the subunit interface close to the decoding center. The protein is Small ribosomal subunit protein uS7 of Methanococcus maripaludis (strain C6 / ATCC BAA-1332).